The sequence spans 940 residues: Antiviral innate immune response receptor RIG-I (940 aa).

CARD domains follow at residues Met1–Glu87 and Trp92–Lys172. Residues Lys48, Lys96, Lys154, Lys164, Lys172, and Lys190 each participate in a glycyl lysine isopeptide (Lys-Gly) (interchain with G-Cter in ubiquitin) cross-link. The interaction with ZC3HAV1 stretch occupies residues Glu219–Gly928. The region spanning Ala249 to Leu428 is the Helicase ATP-binding domain. ATP is bound at residue Ala262 to Thr269. The DECH box signature appears at Asp370–His373. Residues Lys613–Phe779 enclose the Helicase C-terminal domain. Residues Gly738–Gly928 form a mediates interaction with RNF135 region. Thr773 carries the post-translational modification Phosphothreonine; by CK2. Positions Asp795–Gly928 constitute an RLR CTR domain. Residue Cys813 participates in Zn(2+) binding. Lys815 is covalently cross-linked (Glycyl lysine isopeptide (Lys-Gly) (interchain with G-Cter in ubiquitin)). Residue Cys816 coordinates Zn(2+). Lys861 carries the N6-acetyllysine modification. Residues Cys867 and Cys872 each coordinate Zn(2+). Lys912 bears the N6-acetyllysine mark.

The protein belongs to the helicase family. RLR subfamily. Monomer; maintained as a monomer in an autoinhibited state. Upon binding of viral RNAs and conformational shift, homooligomerizes and forms filaments on these molecules. Interacts (via tandem CARD domain) with MAVS/IPS1 promoting its filamentation. Interacts with DHX58/LGP2, IKBKE, TBK1 and STING1. Interacts (via CARD domain) with TRIM25 (via SPRY domain). Interacts (double-stranded RNA-bound oligomeric form) with RNF135 (homodimer); involved in RNA length-dependent activation of the RIG-I signaling pathway. Interacts with CYLD. Interacts with NLRC5; blocks the interaction of MAVS/IPS1 to RIGI. Interacts with SRC. Interacts with DDX60. Interacts with ZC3HAV1 (via zinc-fingers) in an RNA-dependent manner. Interacts (via tandem CARD domain) with SEC14L1; the interaction is direct and impairs the interaction of RIGI with MAVS/IPS1. Interacts with VCP/p97; interaction is direct and allows the recruitment of RNF125 and subsequent ubiquitination and degradation. Interacts with NOP53; may regulate RIGI through USP15-mediated 'Lys-63'-linked deubiquitination. Interacts with SIGLEC10, CBL and PTPN11; within a negative feedback loop leading to RIGI degradation. Interacts with LRRC25. Interacts with ZCCHC3; leading to activation of RIGI. Interacts with RNF123. Interacts with UBE2D3 and UBE2N; E2 ubiquitin ligases involved in RNF135-mediated ubiquitination of RIGI and activation of the RIG-I signaling pathway. Interacts with IFIT3. Interacts with DDX3X. Interacts with RTN3. Interacts with ARL16; this interaction is GTP-dependent and induced upon viral infection; this interaction suppresses the RNA sensing activity of RIGI. Interacts with DHX16; this interaction enhances RIGI-mediated antiviral response. Interacts with IRGM; promoting RIGI degradation. Interacts with IFI6; this interaction inhibits RIGI activation. Interacts with ECSIT; this interaction bridges RIGI to the MAVS complex at the mitochondrion. Interacts with YWHAE; this interaction drives RIGI at the mitochondrion. Post-translationally, phosphorylated in resting cells and dephosphorylated in RNA virus-infected cells. Phosphorylation at Thr-773 results in inhibition of its activity while dephosphorylation at these sites results in its activation. In terms of processing, ISGylated. Conjugated to ubiquitin-like protein ISG15 upon IFN-beta stimulation. ISGylation negatively regulates its function in antiviral signaling response. Sumoylated, probably by MUL1; inhibiting its polyubiquitination. Post-translationally, acetylated in response to RNA virus infection. Deacetylated by HDAC6 in the presence of viral mRNAs which is required for detection of viral RNA by RIGI. In terms of processing, ubiquitinated. 'Lys-63' ubiquitination by RNF135, which occurs after RNA-binding and homodimerization, releases the autoinhibition of the CARD domains by the RLR CTR domain, an essential step in the activation of the RIG-I signaling pathway. Also ubiquitinated by TRIM4. Also undergoes 'Lys-48' ubiquitination by RNF125 that leads to proteasomal degradation. 'Lys-48' ubiquitination follows viral infection and is enhanced by 'Lys-63'-linked ubiquitination of the CARD domains that promotes interaction with VCP/p97 and subsequent recruitment of RNF125. Within a negative feedback loop involving SIGLEC10 and PTPN11, 'Lys-48' ubiquitination at Lys-815 by CBL also elicits the proteasomal degradation of RIGI. Deubiquitinated by CYLD, a protease that selectively cleaves 'Lys-63'-linked ubiquitin chains. Also probably deubiquitinated by USP17L2/USP17 that cleaves 'Lys-48'- and 'Lys-63'-linked ubiquitin chains and positively regulates the receptor. Ubiquitinated by TRIM40 via 'Lys-48'-linked ubiquitination; leading to proteasomal degradation. Deubiquitinated by USP27X that cleaves 'Lys-63'-linked ubiquitin chains and inhibits the innate immune receptor activity. Deubiquitinated by USP3 that also cleaves 'Lys-63'-linked ubiquitin chains and inhibits the innate immune receptor activity. Degraded via selective autophagy following interaction with IRGM. IRGM promotes RIGI recruitment to autophagosome membranes, promoting its SQSTM1/p62-dependent autophagic degradation. In terms of tissue distribution, ubiquitously expressed, with highest levels in spleen, liver, intestine and heart. Up-regulated in tracheobronchial lymph node and tonsils during porcine reproductive and respiratory syndrome virus (PRRSV) infection.

It localises to the cytoplasm. The protein resides in the cell projection. The protein localises to the ruffle membrane. It is found in the cytoskeleton. Its subcellular location is the cell junction. It localises to the tight junction. It catalyses the reaction ATP + H2O = ADP + phosphate + H(+). Its function is as follows. Innate immune receptor that senses cytoplasmic viral nucleic acids and activates a downstream signaling cascade leading to the production of type I interferons and pro-inflammatory cytokines. Forms a ribonucleoprotein complex with viral RNAs on which it homooligomerizes to form filaments. The homooligomerization allows the recruitment of RNF135 an E3 ubiquitin-protein ligase that activates and amplifies the RIG-I-mediated antiviral signaling in an RNA length-dependent manner through ubiquitination-dependent and -independent mechanisms. Upon activation, associates with mitochondria antiviral signaling protein (MAVS/IPS1) that activates the IKK-related kinases TBK1 and IKBKE which in turn phosphorylate the interferon regulatory factors IRF3 and IRF7, activating transcription of antiviral immunological genes including the IFN-alpha and IFN-beta interferons. Ligands include: 5'-triphosphorylated ssRNA and dsRNA and short dsRNA (&lt;1 kb in length). In addition to the 5'-triphosphate moiety, blunt-end base pairing at the 5'-end of the RNA is very essential. Overhangs at the non-triphosphorylated end of the dsRNA RNA have no major impact on its activity. A 3'overhang at the 5'triphosphate end decreases and any 5'overhang at the 5' triphosphate end abolishes its activity. Detects both positive and negative strand RNA viruses including members of the families Paramyxoviridae, Rhabdoviridae: vesicular stomatitis virus (VSV) Orthomyxoviridae: influenza A and B virus, Flaviviridae: Japanese encephalitis virus (JEV). It also detects rotavirus and reovirus. Also involved in antiviral signaling in response to viruses containing a dsDNA genome. Detects dsRNA produced from non-self dsDNA by RNA polymerase III. May play important roles in granulocyte production and differentiation, bacterial phagocytosis and in the regulation of cell migration. This chain is Antiviral innate immune response receptor RIG-I, found in Sus scrofa (Pig).